Here is a 79-residue protein sequence, read N- to C-terminus: uncharacterized protein (79 aa).

Residues 1–19 (MKYVALAFVLSLVILQISA) form the signal peptide. The disordered stretch occupies residues 52 to 71 (RGRKSRTQSGRNQGKSTSDS). Residues 58 to 71 (TQSGRNQGKSTSDS) are compositionally biased toward polar residues.

Nacreous layer of shell (at protein level). Expressed primarily in the mantle with highest level in the mantle pallium and lower level in the mantle edge.

The protein localises to the secreted. This is an uncharacterized protein from Margaritifera margaritifera (Freshwater pearl mussel).